The sequence spans 114 residues: Progonadoliberin-2 (114 aa).

Positions 1–25 are cleaved as a signal peptide; sequence MASSMLGFLLLLLLLMAAHPGPSEA. The interval 22 to 80 is disordered; it reads PSEAQHWSHGWYPGGKRASNSPQDPQSALRPPAPSAAQTAHSFRSAALASPEDSVPWEG. Gly35 carries the glycine amide modification.

The protein belongs to the GnRH family. In terms of tissue distribution, midbrain.

Its subcellular location is the secreted. Its function is as follows. Stimulates the secretion of gonadotropins; it stimulates the secretion of both luteinizing and follicle-stimulating hormones. This chain is Progonadoliberin-2 (GNRH2), found in Tupaia belangeri (Common tree shrew).